Here is a 486-residue protein sequence, read N- to C-terminus: Membrane-bound lytic murein transglycosylase F (486 aa).

Residues 1 to 21 (MTRIKLSYFTIGLVALLLALA) form the signal peptide. The interval 22–268 (LWPNIPWRNG…RLEEKYLGHV (247 aa)) is non-LT domain. An LT domain region spans residues 269-486 (GSFDYVDTKT…VVGPGWSIGD (218 aa)). Glu-313 is an active-site residue.

The protein in the N-terminal section; belongs to the bacterial solute-binding protein 3 family. In the C-terminal section; belongs to the transglycosylase Slt family.

It is found in the cell outer membrane. It catalyses the reaction Exolytic cleavage of the (1-&gt;4)-beta-glycosidic linkage between N-acetylmuramic acid (MurNAc) and N-acetylglucosamine (GlcNAc) residues in peptidoglycan, from either the reducing or the non-reducing ends of the peptidoglycan chains, with concomitant formation of a 1,6-anhydrobond in the MurNAc residue.. Its function is as follows. Murein-degrading enzyme that degrades murein glycan strands and insoluble, high-molecular weight murein sacculi, with the concomitant formation of a 1,6-anhydromuramoyl product. Lytic transglycosylases (LTs) play an integral role in the metabolism of the peptidoglycan (PG) sacculus. Their lytic action creates space within the PG sacculus to allow for its expansion as well as for the insertion of various structures such as secretion systems and flagella. The sequence is that of Membrane-bound lytic murein transglycosylase F from Yersinia pseudotuberculosis serotype I (strain IP32953).